Consider the following 250-residue polypeptide: tRNA (guanine-N(1)-)-methyltransferase (250 aa).

S-adenosyl-L-methionine is bound by residues glycine 116 and 136 to 141 (IGDYVL).

Belongs to the RNA methyltransferase TrmD family. In terms of assembly, homodimer.

Its subcellular location is the cytoplasm. It carries out the reaction guanosine(37) in tRNA + S-adenosyl-L-methionine = N(1)-methylguanosine(37) in tRNA + S-adenosyl-L-homocysteine + H(+). Specifically methylates guanosine-37 in various tRNAs. The polypeptide is tRNA (guanine-N(1)-)-methyltransferase (Pseudomonas entomophila (strain L48)).